The primary structure comprises 284 residues: Thymidylate synthase (284 aa).

Arg34 is a binding site for dUMP. A (6R)-5,10-methylene-5,6,7,8-tetrahydrofolate-binding site is contributed by His64. Position 139 to 140 (139 to 140 (RR)) interacts with dUMP. The active-site Nucleophile is the Cys159. Residues 186-189 (RSAD), Asn197, and 227-229 (HIY) contribute to the dUMP site. Asp189 is a (6R)-5,10-methylene-5,6,7,8-tetrahydrofolate binding site. Ala283 is a (6R)-5,10-methylene-5,6,7,8-tetrahydrofolate binding site.

This sequence belongs to the thymidylate synthase family. Bacterial-type ThyA subfamily. In terms of assembly, homodimer.

Its subcellular location is the cytoplasm. It catalyses the reaction dUMP + (6R)-5,10-methylene-5,6,7,8-tetrahydrofolate = 7,8-dihydrofolate + dTMP. The protein operates within pyrimidine metabolism; dTTP biosynthesis. Its function is as follows. Catalyzes the reductive methylation of 2'-deoxyuridine-5'-monophosphate (dUMP) to 2'-deoxythymidine-5'-monophosphate (dTMP) while utilizing 5,10-methylenetetrahydrofolate (mTHF) as the methyl donor and reductant in the reaction, yielding dihydrofolate (DHF) as a by-product. This enzymatic reaction provides an intracellular de novo source of dTMP, an essential precursor for DNA biosynthesis. This Polaromonas sp. (strain JS666 / ATCC BAA-500) protein is Thymidylate synthase.